Consider the following 235-residue polypeptide: Thiamine import ATP-binding protein ThiQ (235 aa).

The 229-residue stretch at 2-230 (LKLENLTYRY…TVPEAAILGM (229 aa)) folds into the ABC transporter domain. An ATP-binding site is contributed by 32–39 (GPSGAGKS).

It belongs to the ABC transporter superfamily. Thiamine importer (TC 3.A.1.19.1) family. In terms of assembly, the complex is composed of two ATP-binding proteins (ThiQ), two transmembrane proteins (ThiP) and a solute-binding protein (ThiB).

It localises to the cell inner membrane. It carries out the reaction thiamine(out) + ATP + H2O = thiamine(in) + ADP + phosphate + H(+). Functionally, part of the ABC transporter complex ThiBPQ involved in thiamine import. Responsible for energy coupling to the transport system. In Photorhabdus laumondii subsp. laumondii (strain DSM 15139 / CIP 105565 / TT01) (Photorhabdus luminescens subsp. laumondii), this protein is Thiamine import ATP-binding protein ThiQ.